The following is a 479-amino-acid chain: Glutamyl-tRNA reductase (479 aa).

Substrate is bound by residues 48-51 (TCNR), serine 104, 109-111 (ERQ), and glutamine 115. The active-site Nucleophile is the cysteine 49. Residue 189–194 (GAGKMG) participates in NADP(+) binding. Residues 417 to 455 (DAGRSLAEAPDADTPDLGEAPSRCPYMTHDPGGDGTETE) form a disordered region.

Belongs to the glutamyl-tRNA reductase family. Homodimer.

The catalysed reaction is (S)-4-amino-5-oxopentanoate + tRNA(Glu) + NADP(+) = L-glutamyl-tRNA(Glu) + NADPH + H(+). The protein operates within porphyrin-containing compound metabolism; protoporphyrin-IX biosynthesis; 5-aminolevulinate from L-glutamyl-tRNA(Glu): step 1/2. Functionally, catalyzes the NADPH-dependent reduction of glutamyl-tRNA(Glu) to glutamate 1-semialdehyde (GSA). The protein is Glutamyl-tRNA reductase of Salinibacter ruber (strain DSM 13855 / M31).